The primary structure comprises 580 residues: Dihydroxy-acid dehydratase (580 aa).

Mg(2+) is bound at residue Asp95. Cys136 is a [2Fe-2S] cluster binding site. Residues Asp137 and Lys138 each coordinate Mg(2+). Lys138 carries the N6-carboxylysine modification. Residue Cys209 coordinates [2Fe-2S] cluster. Glu462 contributes to the Mg(2+) binding site. Ser488 serves as the catalytic Proton acceptor.

The protein belongs to the IlvD/Edd family. In terms of assembly, homodimer. Requires [2Fe-2S] cluster as cofactor. Mg(2+) serves as cofactor.

The enzyme catalyses (2R)-2,3-dihydroxy-3-methylbutanoate = 3-methyl-2-oxobutanoate + H2O. It carries out the reaction (2R,3R)-2,3-dihydroxy-3-methylpentanoate = (S)-3-methyl-2-oxopentanoate + H2O. It functions in the pathway amino-acid biosynthesis; L-isoleucine biosynthesis; L-isoleucine from 2-oxobutanoate: step 3/4. The protein operates within amino-acid biosynthesis; L-valine biosynthesis; L-valine from pyruvate: step 3/4. Functionally, functions in the biosynthesis of branched-chain amino acids. Catalyzes the dehydration of (2R,3R)-2,3-dihydroxy-3-methylpentanoate (2,3-dihydroxy-3-methylvalerate) into 2-oxo-3-methylpentanoate (2-oxo-3-methylvalerate) and of (2R)-2,3-dihydroxy-3-methylbutanoate (2,3-dihydroxyisovalerate) into 2-oxo-3-methylbutanoate (2-oxoisovalerate), the penultimate precursor to L-isoleucine and L-valine, respectively. The chain is Dihydroxy-acid dehydratase from Leuconostoc mesenteroides subsp. mesenteroides (strain ATCC 8293 / DSM 20343 / BCRC 11652 / CCM 1803 / JCM 6124 / NCDO 523 / NBRC 100496 / NCIMB 8023 / NCTC 12954 / NRRL B-1118 / 37Y).